Here is a 1276-residue protein sequence, read N- to C-terminus: Probable outer membrane protein pmp6 (1276 aa).

The first 23 residues, 1-23 (MKYSLPWLLTSSALVFSLHPLMA), serve as a signal peptide directing secretion. The Autotransporter domain maps to 981 to 1276 (DAPSHPGIWI…NANCGTRYSF (296 aa)).

Belongs to the PMP outer membrane protein family.

The protein localises to the secreted. It localises to the cell wall. The protein resides in the cell outer membrane. This Chlamydia pneumoniae (Chlamydophila pneumoniae) protein is Probable outer membrane protein pmp6 (pmp6).